Here is a 605-residue protein sequence, read N- to C-terminus: DNA primase (605 aa).

A CHC2-type zinc finger spans residues 38 to 62; sequence CPFHDEKTPSFTVSEDKQICHCFGC. The 82-residue stretch at 260–341 folds into the Toprim domain; the sequence is DEIVLLEGFM…NVFVIQLPSG (82 aa). Residues Glu266, Asp310, and Asp312 each coordinate Mg(2+).

Belongs to the DnaG primase family. In terms of assembly, monomer. Interacts with DnaB. Zn(2+) is required as a cofactor. Mg(2+) serves as cofactor.

The enzyme catalyses ssDNA + n NTP = ssDNA/pppN(pN)n-1 hybrid + (n-1) diphosphate.. Functionally, RNA polymerase that catalyzes the synthesis of short RNA molecules used as primers for DNA polymerase during DNA replication. In Staphylococcus aureus (strain MSSA476), this protein is DNA primase.